The chain runs to 128 residues: Sirohydrochlorin cobaltochelatase (128 aa).

The Proton acceptor role is filled by H9. Residue H9 coordinates Co(2+). Substrate contacts are provided by residues K43 and 68–73; that span reads FATGTH. H73 is a binding site for Co(2+).

Belongs to the CbiX family. CbiXS subfamily. Homotetramer; dimer of dimers.

It catalyses the reaction Co-sirohydrochlorin + 2 H(+) = sirohydrochlorin + Co(2+). The protein operates within cofactor biosynthesis; adenosylcobalamin biosynthesis; cob(II)yrinate a,c-diamide from sirohydrochlorin (anaerobic route): step 1/10. Its function is as follows. Catalyzes the insertion of Co(2+) into sirohydrochlorin as part of the anaerobic pathway to cobalamin biosynthesis. This is Sirohydrochlorin cobaltochelatase from Saccharolobus islandicus (strain Y.G.57.14 / Yellowstone #1) (Sulfolobus islandicus).